The following is a 459-amino-acid chain: Zinc finger protein ZFP2 (459 aa).

13 C2H2-type zinc fingers span residues 100-122, 128-150, 156-178, 184-206, 212-234, 240-262, 268-290, 296-318, 324-346, 352-374, 380-402, 408-430, and 436-458; these read YGCD…QRIH, YTCN…QRTH, YKCH…QRTH, YQCK…ERIH, YECN…QRSH, YECS…QRNH, YKCN…QRLH, FECN…RRIH, YECM…QVIH, YECT…QRIH, YECD…QRIH, and YQCN…QRTH.

Belongs to the krueppel C2H2-type zinc-finger protein family.

It localises to the nucleus. In terms of biological role, probable transcription factor involved in neuronal differentiation and/or phenotypic maintenance. The sequence is that of Zinc finger protein ZFP2 (Zfp2) from Mus musculus (Mouse).